The chain runs to 231 residues: MAKISKRLQNLKATVDRNKLYAVDEAIALVKAAATAKFDESIDIAVNLGVDPRKSDQVVRGSVVLPRGTGKSVRVAVFAQGANAEAAKAAGAEVVGFDDLAEQVKAGNLDFDVVIASPDAMRVVGQLGQILGPRGLMPNPKVGTVTPNVAEAVKNAKAGQVQYRTDKAGIIHATIGRASFEAEALRENFSALVDALVKAKPAASKGVYLKKIAVSSTMGIGARVDTATVNA.

Belongs to the universal ribosomal protein uL1 family. In terms of assembly, part of the 50S ribosomal subunit.

Functionally, binds directly to 23S rRNA. The L1 stalk is quite mobile in the ribosome, and is involved in E site tRNA release. In terms of biological role, protein L1 is also a translational repressor protein, it controls the translation of the L11 operon by binding to its mRNA. The protein is Large ribosomal subunit protein uL1 of Chromobacterium violaceum (strain ATCC 12472 / DSM 30191 / JCM 1249 / CCUG 213 / NBRC 12614 / NCIMB 9131 / NCTC 9757 / MK).